The chain runs to 422 residues: BTB/POZ domain-containing protein KCTD18 (422 aa).

Positions 12–80 constitute a BTB domain; the sequence is DILRLNVGGC…YLHGEVHIPT (69 aa). 2 disordered regions span residues 289–357 and 376–422; these read VKNS…THLP and LRRT…DQTK. Over residues 396 to 406 the composition is skewed to pro residues; that stretch reads PAGPPEPPPDA. A compositionally biased stretch (polar residues) spans 413-422; that stretch reads WTENGQDQTK.

The chain is BTB/POZ domain-containing protein KCTD18 (KCTD18) from Bos taurus (Bovine).